Consider the following 555-residue polypeptide: Chaperonin GroEL (555 aa).

Residues 29–32, K50, 86–90, G418, and D499 contribute to the ATP site; these read TLGP and DGTTT. The tract at residues 528–555 is disordered; sequence HEEDNNTGNRSGGGVGGGHHGGMGGMDF. Positions 537–555 are enriched in gly residues; that stretch reads RSGGGVGGGHHGGMGGMDF.

It belongs to the chaperonin (HSP60) family. Forms a cylinder of 14 subunits composed of two heptameric rings stacked back-to-back. Interacts with the co-chaperonin GroES.

It is found in the cytoplasm. It catalyses the reaction ATP + H2O + a folded polypeptide = ADP + phosphate + an unfolded polypeptide.. Functionally, together with its co-chaperonin GroES, plays an essential role in assisting protein folding. The GroEL-GroES system forms a nano-cage that allows encapsulation of the non-native substrate proteins and provides a physical environment optimized to promote and accelerate protein folding. This is Chaperonin GroEL from Orientia tsutsugamushi (Rickettsia tsutsugamushi).